We begin with the raw amino-acid sequence, 124 residues long: Large ribosomal subunit protein uL18 (124 aa).

It belongs to the universal ribosomal protein uL18 family. In terms of assembly, part of the 50S ribosomal subunit; part of the 5S rRNA/L5/L18/L25 subcomplex. Contacts the 5S and 23S rRNAs.

In terms of biological role, this is one of the proteins that bind and probably mediate the attachment of the 5S RNA into the large ribosomal subunit, where it forms part of the central protuberance. This chain is Large ribosomal subunit protein uL18, found in Thermomicrobium roseum (strain ATCC 27502 / DSM 5159 / P-2).